The primary structure comprises 420 residues: 3-phosphoshikimate 1-carboxyvinyltransferase (420 aa).

3-phosphoshikimate-binding residues include K20, S21, and R25. K20 contributes to the phosphoenolpyruvate binding site. Phosphoenolpyruvate-binding residues include G90 and R118. The 3-phosphoshikimate site is built by S159, S160, Q161, S187, D303, and K330. Q161 contacts phosphoenolpyruvate. D303 serves as the catalytic Proton acceptor. Residues R334, R376, and K402 each contribute to the phosphoenolpyruvate site.

The protein belongs to the EPSP synthase family. In terms of assembly, monomer.

It localises to the cytoplasm. It carries out the reaction 3-phosphoshikimate + phosphoenolpyruvate = 5-O-(1-carboxyvinyl)-3-phosphoshikimate + phosphate. The protein operates within metabolic intermediate biosynthesis; chorismate biosynthesis; chorismate from D-erythrose 4-phosphate and phosphoenolpyruvate: step 6/7. Functionally, catalyzes the transfer of the enolpyruvyl moiety of phosphoenolpyruvate (PEP) to the 5-hydroxyl of shikimate-3-phosphate (S3P) to produce enolpyruvyl shikimate-3-phosphate and inorganic phosphate. This chain is 3-phosphoshikimate 1-carboxyvinyltransferase, found in Brachyspira hyodysenteriae (strain ATCC 49526 / WA1).